Reading from the N-terminus, the 373-residue chain is Putative glutamate--cysteine ligase 2-1 (373 aa).

Belongs to the glutamate--cysteine ligase type 2 family. YbdK subfamily.

The catalysed reaction is L-cysteine + L-glutamate + ATP = gamma-L-glutamyl-L-cysteine + ADP + phosphate + H(+). Its function is as follows. ATP-dependent carboxylate-amine ligase which exhibits weak glutamate--cysteine ligase activity. The protein is Putative glutamate--cysteine ligase 2-1 of Legionella pneumophila (strain Paris).